The following is a 160-amino-acid chain: uncharacterized protein (160 aa).

This is an uncharacterized protein from Lactobacillus helveticus (Lactobacillus suntoryeus).